The sequence spans 374 residues: Queuine tRNA-ribosyltransferase (374 aa).

D89 acts as the Proton acceptor in catalysis. Substrate is bound by residues 89–93 (DSGGF), D143, Q185, and G212. Positions 243–249 (GVGKPED) are RNA binding. D262 acts as the Nucleophile in catalysis. The interval 267–271 (TRNAR) is RNA binding; important for wobble base 34 recognition. C300, C302, C305, and H331 together coordinate Zn(2+).

Belongs to the queuine tRNA-ribosyltransferase family. In terms of assembly, homodimer. Within each dimer, one monomer is responsible for RNA recognition and catalysis, while the other monomer binds to the replacement base PreQ1. Zn(2+) serves as cofactor.

The catalysed reaction is 7-aminomethyl-7-carbaguanine + guanosine(34) in tRNA = 7-aminomethyl-7-carbaguanosine(34) in tRNA + guanine. Its pathway is tRNA modification; tRNA-queuosine biosynthesis. Catalyzes the base-exchange of a guanine (G) residue with the queuine precursor 7-aminomethyl-7-deazaguanine (PreQ1) at position 34 (anticodon wobble position) in tRNAs with GU(N) anticodons (tRNA-Asp, -Asn, -His and -Tyr). Catalysis occurs through a double-displacement mechanism. The nucleophile active site attacks the C1' of nucleotide 34 to detach the guanine base from the RNA, forming a covalent enzyme-RNA intermediate. The proton acceptor active site deprotonates the incoming PreQ1, allowing a nucleophilic attack on the C1' of the ribose to form the product. After dissociation, two additional enzymatic reactions on the tRNA convert PreQ1 to queuine (Q), resulting in the hypermodified nucleoside queuosine (7-(((4,5-cis-dihydroxy-2-cyclopenten-1-yl)amino)methyl)-7-deazaguanosine). The sequence is that of Queuine tRNA-ribosyltransferase from Saccharophagus degradans (strain 2-40 / ATCC 43961 / DSM 17024).